Consider the following 93-residue polypeptide: Neutrophil cationic peptide 1 type A (93 aa).

The first 19 residues, 1–19, serve as a signal peptide directing secretion; the sequence is MRTVPLFAACLLLTLMAQA. Positions 20 to 62 are excised as a propeptide; that stretch reads EPLPRAADHSDTKMKGDREDHVAVISFWEEESTSLEDAGAGAG. 3 disulfide bridges follow: Cys-65/Cys-93, Cys-67/Cys-82, and Cys-72/Cys-92.

Belongs to the alpha-defensin family.

The protein localises to the secreted. In terms of biological role, has antibiotic, anti-fungi and antiviral activity. This is Neutrophil cationic peptide 1 type A from Cavia porcellus (Guinea pig).